Reading from the N-terminus, the 233-residue chain is MDQDEGLTAVDNIVTQFNTYEDFLDSQITTVDLYYLEDESLARQLVELGYRGTGEIVKREDFEARKAAINIARQAERTQKKTLTSAGKELHDDFLKALAMREEDNRAGKLSTVIFIRDRNPHGQEVSGYIDYAHRLKSEDFEVYFNGKRRLLPRTTDMSFYNWDSHIAVCNSSPNYQVIADNPEGLLFKYKRDRKILNVDPKAHPGDNSTRIPIQTDLYAHVVLFDHVSRRKT.

In terms of tissue distribution, abundantly expressed in testis, specifically in spermatogonia and primary spermatocytes but not in secondary spermatocytes and spermatids.

It localises to the cytoplasm. The protein localises to the nucleus. In terms of biological role, may be involved in spermatogenesis. The protein is Cilia- and flagella-associated protein 299 of Mus musculus (Mouse).